The primary structure comprises 209 residues: Large ribosomal subunit protein uL3c (209 aa).

The disordered stretch occupies residues 132–154 (PMSHGSKNHRLPGSIGAGSTPGR).

The protein belongs to the universal ribosomal protein uL3 family. As to quaternary structure, part of the 50S ribosomal subunit.

It is found in the plastid. The protein localises to the cyanelle. Functionally, one of the primary rRNA binding proteins, it binds directly near the 3'-end of the 23S rRNA, where it nucleates assembly of the 50S subunit. In Cyanophora paradoxa, this protein is Large ribosomal subunit protein uL3c (rpl3).